Here is a 264-residue protein sequence, read N- to C-terminus: AA9 family lytic polysaccharide monooxygenase A (264 aa).

The N-terminal stretch at 1-18 (MHFAALAILSSLVASAAA) is a signal peptide. Residue His19 coordinates Cu(2+). N-linked (GlcNAc...) asparagine glycosylation is found at Asn51 and Asn75. The cysteines at positions 59 and 182 are disulfide-linked. Cu(2+) is bound at residue His96. Residue Asn110 is glycosylated (N-linked (GlcNAc...) asparagine). Residue His162 coordinates O2. Residue Tyr179 coordinates Cu(2+). Residues Asn218 and Asn251 are each glycosylated (N-linked (GlcNAc...) asparagine).

This sequence belongs to the polysaccharide monooxygenase AA9 family. It depends on Cu(2+) as a cofactor.

It localises to the secreted. It carries out the reaction [(1-&gt;4)-beta-D-glucosyl]n+m + reduced acceptor + O2 = 4-dehydro-beta-D-glucosyl-[(1-&gt;4)-beta-D-glucosyl]n-1 + [(1-&gt;4)-beta-D-glucosyl]m + acceptor + H2O.. Lytic polysaccharide monooxygenase (LPMO) that depolymerizes crystalline and amorphous polysaccharides via the oxidation of scissile alpha- or beta-(1-4)-glycosidic bonds, yielding C4 oxidation products. Catalysis by LPMOs requires the reduction of the active-site copper from Cu(II) to Cu(I) by a reducing agent and H(2)O(2) or O(2) as a cosubstrate. Active on cellulose and cello-oligosaccharides, as well as plant cell wall-derived hemicellulosic polysaccharides. Also active on cello-oligosaccharides such as cellohexaose, cellopentaose or cellotetraose. The chain is AA9 family lytic polysaccharide monooxygenase A from Phanerochaete carnosa (strain HHB-10118-sp) (White-rot fungus).